An 86-amino-acid polypeptide reads, in one-letter code: Large ribosomal subunit protein bL27 (86 aa).

Positions 1–10 (MAQKKGGGST) are enriched in gly residues. The disordered stretch occupies residues 1 to 21 (MAQKKGGGSTRNGRDSESKRL).

This sequence belongs to the bacterial ribosomal protein bL27 family.

This Ralstonia pickettii (strain 12J) protein is Large ribosomal subunit protein bL27.